A 461-amino-acid chain; its full sequence is D-phenylhydantoinase (461 aa).

Residues H59, H61, and K151 each coordinate a divalent metal cation. The residue at position 151 (K151) is an N6-carboxylysine. Position 156 (Y156) interacts with substrate. A divalent metal cation-binding residues include H182 and H239. A substrate-binding site is contributed by S286. D313 is a binding site for a divalent metal cation. N335 serves as a coordination point for substrate.

The protein belongs to the metallo-dependent hydrolases superfamily. Hydantoinase/dihydropyrimidinase family. In terms of assembly, homotetramer. The cofactor is a divalent metal cation. In terms of processing, carboxylation allows a single lysine to coordinate two divalent metal cations.

The enzyme catalyses D-5-phenylhydantoin + H2O = N-carbamoyl-D-phenylglycine + H(+). In terms of biological role, catalyzes the stereospecific hydrolysis of the cyclic amide bond of D-hydantoin derivatives with an aromatic side chains at the 5'-position. Has no activity on dihydropyrimidines. The physiological function is unknown. The protein is D-phenylhydantoinase of Escherichia coli O9:H4 (strain HS).